Here is a 386-residue protein sequence, read N- to C-terminus: Orphan methyltransferase M.SssI (386 aa).

The 376-residue stretch at 11–386 (LRVFEAFAGI…LEAIIDKIGG (376 aa)) folds into the SAM-dependent MTase C5-type domain. Cysteine 141 is a catalytic residue.

The protein belongs to the class I-like SAM-binding methyltransferase superfamily. C5-methyltransferase family.

It carries out the reaction a 2'-deoxycytidine in DNA + S-adenosyl-L-methionine = a 5-methyl-2'-deoxycytidine in DNA + S-adenosyl-L-homocysteine + H(+). Its function is as follows. This de novo methylase acts completely and exclusively on CG residues in DNA; methylates unmethylated and hemi-methylated DNA. The polypeptide is Orphan methyltransferase M.SssI (sssIM) (Spiroplasma monobiae (strain ATCC 33825 / MQ-1)).